We begin with the raw amino-acid sequence, 406 residues long: Protein transport protein HofC homolog (406 aa).

A run of 3 helical transmembrane segments spans residues 167–187, 214–234, and 379–399; these read MVLGISLLLTLALLLFIVPQF, QNIGILLFFVLSFFLFYYFYL, and MMVIIGSLIGIIMMGMYLPIF.

This sequence belongs to the GSP F family.

Its subcellular location is the cell inner membrane. In Haemophilus influenzae (strain ATCC 51907 / DSM 11121 / KW20 / Rd), this protein is Protein transport protein HofC homolog (hofC).